The following is a 235-amino-acid chain: Phosphoribosylaminoimidazole-succinocarboxamide synthase (235 aa).

Belongs to the SAICAR synthetase family.

The catalysed reaction is 5-amino-1-(5-phospho-D-ribosyl)imidazole-4-carboxylate + L-aspartate + ATP = (2S)-2-[5-amino-1-(5-phospho-beta-D-ribosyl)imidazole-4-carboxamido]succinate + ADP + phosphate + 2 H(+). It functions in the pathway purine metabolism; IMP biosynthesis via de novo pathway; 5-amino-1-(5-phospho-D-ribosyl)imidazole-4-carboxamide from 5-amino-1-(5-phospho-D-ribosyl)imidazole-4-carboxylate: step 1/2. This chain is Phosphoribosylaminoimidazole-succinocarboxamide synthase, found in Streptococcus pneumoniae serotype 19F (strain G54).